A 203-amino-acid chain; its full sequence is Translation initiation factor IF-3 (203 aa).

Belongs to the IF-3 family. In terms of assembly, monomer.

The protein resides in the cytoplasm. Functionally, IF-3 binds to the 30S ribosomal subunit and shifts the equilibrium between 70S ribosomes and their 50S and 30S subunits in favor of the free subunits, thus enhancing the availability of 30S subunits on which protein synthesis initiation begins. The sequence is that of Translation initiation factor IF-3 from Corynebacterium efficiens (strain DSM 44549 / YS-314 / AJ 12310 / JCM 11189 / NBRC 100395).